Consider the following 534-residue polypeptide: uncharacterized protein (534 aa).

The next 2 helical transmembrane spans lie at 149 to 169 (ILTT…SITI) and 185 to 205 (VFLV…SLIF).

It is found in the cell membrane. This is an uncharacterized protein from Mycoplasma pneumoniae (strain ATCC 29342 / M129 / Subtype 1) (Mycoplasmoides pneumoniae).